The sequence spans 535 residues: ATP-dependent RNA helicase DBP3 (535 aa).

The span at 1–21 (MGSSSKSEKRKYDDGEELLER) shows a compositional bias: basic and acidic residues. The interval 1–96 (MGSSSKSEKR…TSYGYVQSSK (96 aa)) is disordered. Positions 35–54 (KKDKKEKKDKKEKKDKKEKK) are enriched in basic residues. The span at 55-72 (DKKEKNKESKEAEARDDS) shows a compositional bias: basic and acidic residues. Positions 79 to 88 (SSSSSTESTS) are enriched in low complexity. The short motif at 128-154 (LSFDQIKLQKDVSSKLTKFPKPTPIQS) is the Q motif element. Residues 157 to 329 (WPFLLDGKDV…NNFMNQPVKV (173 aa)) enclose the Helicase ATP-binding domain. 170–177 (AETGSGKT) contacts ATP. The DEAD box motif lies at 276–279 (DEAD). The Helicase C-terminal domain maps to 362–508 (NLLQKYQNTG…PVPEALLKYG (147 aa)).

Belongs to the DEAD box helicase family. DDX5/DBP2 subfamily.

Its subcellular location is the nucleus. It is found in the nucleolus. It carries out the reaction ATP + H2O = ADP + phosphate + H(+). In terms of biological role, ATP-dependent RNA helicase required for 60S ribosomal subunit synthesis. Involved in efficient pre-rRNA processing, predominantly at site A3, which is necessary for the normal formation of 25S and 5.8S rRNAs. The sequence is that of ATP-dependent RNA helicase DBP3 (DBP3) from Lodderomyces elongisporus (strain ATCC 11503 / CBS 2605 / JCM 1781 / NBRC 1676 / NRRL YB-4239) (Yeast).